Here is a 615-residue protein sequence, read N- to C-terminus: Granule-bound starch synthase 1, chloroplastic/amyloplastic (615 aa).

A chloroplast-targeting transit peptide spans 1–70 (MAALVTSQLA…DRRCLSMVVR (70 aa)). An ADP-alpha-D-glucose-binding site is contributed by K91.

This sequence belongs to the glycosyltransferase 1 family. Bacterial/plant glycogen synthase subfamily. In terms of tissue distribution, found in seeds and pollen.

The protein localises to the plastid. It is found in the chloroplast. The protein resides in the amyloplast. The catalysed reaction is an NDP-alpha-D-glucose + [(1-&gt;4)-alpha-D-glucosyl](n) = [(1-&gt;4)-alpha-D-glucosyl](n+1) + a ribonucleoside 5'-diphosphate + H(+). It participates in glycan biosynthesis; starch biosynthesis. The chain is Granule-bound starch synthase 1, chloroplastic/amyloplastic (WAXY) from Triticum aestivum (Wheat).